Reading from the N-terminus, the 317-residue chain is Olfactory receptor 2G2 (317 aa).

Topologically, residues 1–28 are extracellular; it reads MGMVRHTNESNLAGFILLGFSDYPQLQK. The N-linked (GlcNAc...) asparagine glycan is linked to asparagine 8. The helical transmembrane segment at 29-52 threads the bilayer; that stretch reads VLFVLILILYLLTILGNTTIILVS. Residues 53-60 lie on the Cytoplasmic side of the membrane; sequence RLEPKLHM. Residues 61–82 form a helical membrane-spanning segment; sequence PMYFFLSHLSFLYRCFTSSVIP. The Extracellular portion of the chain corresponds to 83–103; the sequence is QLLVNLWEPMKTIAYGGCLVH. Cysteine 100 and cysteine 192 are disulfide-bonded. A helical transmembrane segment spans residues 104 to 123; that stretch reads LYNSHALGSTECVLPAVMSC. Residues 124-142 lie on the Cytoplasmic side of the membrane; it reads DRYVAVCRPLHYTVLMHIH. The helical transmembrane segment at 143–161 threads the bilayer; it reads LCMALASMAWLSGIATTLV. Over 162 to 198 the chain is Extracellular; sequence QSTLTLQLPFCGHRQVDHFICEVPVLIKLACVGTTFN. A helical membrane pass occupies residues 199–222; sequence EAELFVASILFLIVPVSFILVSSG. Over 223–239 the chain is Cytoplasmic; the sequence is YIAHAVLRIKSATRRQK. Residues 240–262 form a helical membrane-spanning segment; sequence AFGTCFSHLTVVTIFYGTIIFMY. At 263–275 the chain is on the extracellular side; sequence LQPAKSRSRDQGK. Residues 276 to 295 traverse the membrane as a helical segment; sequence FVSLFYTVVTRMLNPLIYTL. Residues 296-317 lie on the Cytoplasmic side of the membrane; the sequence is RIKEVKGALKKVLAKALGVNIL.

Belongs to the G-protein coupled receptor 1 family.

The protein resides in the cell membrane. Odorant receptor. This Homo sapiens (Human) protein is Olfactory receptor 2G2 (OR2G2).